The sequence spans 286 residues: Bifunctional protein FolD (286 aa).

NADP(+)-binding positions include 165-167 (GRS), Ser190, and Ile231.

It belongs to the tetrahydrofolate dehydrogenase/cyclohydrolase family. As to quaternary structure, homodimer.

It carries out the reaction (6R)-5,10-methylene-5,6,7,8-tetrahydrofolate + NADP(+) = (6R)-5,10-methenyltetrahydrofolate + NADPH. It catalyses the reaction (6R)-5,10-methenyltetrahydrofolate + H2O = (6R)-10-formyltetrahydrofolate + H(+). Its pathway is one-carbon metabolism; tetrahydrofolate interconversion. In terms of biological role, catalyzes the oxidation of 5,10-methylenetetrahydrofolate to 5,10-methenyltetrahydrofolate and then the hydrolysis of 5,10-methenyltetrahydrofolate to 10-formyltetrahydrofolate. This is Bifunctional protein FolD from Thermodesulfovibrio yellowstonii (strain ATCC 51303 / DSM 11347 / YP87).